We begin with the raw amino-acid sequence, 347 residues long: S-adenosylmethionine:tRNA ribosyltransferase-isomerase (347 aa).

This sequence belongs to the QueA family. As to quaternary structure, monomer.

Its subcellular location is the cytoplasm. The enzyme catalyses 7-aminomethyl-7-carbaguanosine(34) in tRNA + S-adenosyl-L-methionine = epoxyqueuosine(34) in tRNA + adenine + L-methionine + 2 H(+). It functions in the pathway tRNA modification; tRNA-queuosine biosynthesis. In terms of biological role, transfers and isomerizes the ribose moiety from AdoMet to the 7-aminomethyl group of 7-deazaguanine (preQ1-tRNA) to give epoxyqueuosine (oQ-tRNA). This Pseudomonas paraeruginosa (strain DSM 24068 / PA7) (Pseudomonas aeruginosa (strain PA7)) protein is S-adenosylmethionine:tRNA ribosyltransferase-isomerase.